A 42-amino-acid polypeptide reads, in one-letter code: Protein Tat (42 aa).

Residues 1–24 are interaction with human CREBBP; sequence MEPVDPNLEPWNHPGSQPKTACNQ. Residues 22–37 are cysteine-rich; it reads CNQCYCKKCSYHCLVC. N6-acetyllysine; by host PCAF is present on Lys28.

Belongs to the lentiviruses Tat family. Interacts with host CCNT1. Associates with the P-TEFb complex composed at least of Tat, P-TEFb (CDK9 and CCNT1), TAR RNA, RNA Pol II. Recruits the HATs CREBBP, TAF1/TFIID, EP300, PCAF and GCN5L2. Interacts with host KAT5/Tip60; this interaction targets the latter to degradation. Interacts with the host deacetylase SIRT1. Interacts with host capping enzyme RNGTT; this interaction stimulates RNGTT. Binds to host KDR, and to the host integrins ITGAV/ITGB3 and ITGA5/ITGB1. Interacts with host KPNB1/importin beta-1 without previous binding to KPNA1/importin alpha-1. Interacts with EIF2AK2. Interacts with host nucleosome assembly protein NAP1L1; this interaction may be required for the transport of Tat within the nucleus, since the two proteins interact at the nuclear rim. Interacts with host C1QBP/SF2P32; this interaction involves lysine-acetylated Tat. Interacts with the host chemokine receptors CCR2, CCR3 and CXCR4. Interacts with host DPP4/CD26; this interaction may trigger an anti-proliferative effect. Interacts with host LDLR. Interacts with the host extracellular matrix metalloproteinase MMP1. Interacts with host PRMT6; this interaction mediates Tat's methylation. Interacts with, and is ubiquitinated by MDM2/Hdm2. Interacts with host PSMC3 and HTATIP2. Interacts with STAB1; this interaction may overcome SATB1-mediated repression of IL2 and IL2RA (interleukin) in T cells by binding to the same domain than HDAC1. Interacts (when acetylated) with human CDK13, thereby increasing HIV-1 mRNA splicing and promoting the production of the doubly spliced HIV-1 protein Nef. Interacts with host TBP; this interaction modulates the activity of transcriptional pre-initiation complex. Interacts with host RELA. Interacts with host PLSCR1; this interaction negatively regulates Tat transactivation activity by altering its subcellular distribution. Phosphorylated by EIF2AK2 on serine and threonine residues adjacent to the basic region important for TAR RNA binding and function. Phosphorylation of Tat by EIF2AK2 is dependent on the prior activation of EIF2AK2 by dsRNA. In terms of processing, asymmetrical arginine methylation by host PRMT6 seems to diminish the transactivation capacity of Tat and affects the interaction with host CCNT1. Post-translationally, polyubiquitination by host MDM2 does not target Tat to degradation, but activates its transactivation function and fosters interaction with CCNT1 and TAR RNA.

Its subcellular location is the host nucleus. The protein resides in the host nucleolus. It is found in the host cytoplasm. The protein localises to the secreted. Functionally, transcriptional activator that increases RNA Pol II processivity, thereby increasing the level of full-length viral transcripts. Recognizes a hairpin structure at the 5'-LTR of the nascent viral mRNAs referred to as the transactivation responsive RNA element (TAR) and recruits the cyclin T1-CDK9 complex (P-TEFb complex) that will in turn hyperphosphorylate the RNA polymerase II to allow efficient elongation. The CDK9 component of P-TEFb and other Tat-activated kinases hyperphosphorylate the C-terminus of RNA Pol II that becomes stabilized and much more processive. Other factors such as HTATSF1/Tat-SF1, SUPT5H/SPT5, and HTATIP2 are also important for Tat's function. Besides its effect on RNA Pol II processivity, Tat induces chromatin remodeling of proviral genes by recruiting the histone acetyltransferases (HATs) CREBBP, EP300 and PCAF to the chromatin. This also contributes to the increase in proviral transcription rate, especially when the provirus integrates in transcriptionally silent region of the host genome. To ensure maximal activation of the LTR, Tat mediates nuclear translocation of NF-kappa-B by interacting with host RELA. Through its interaction with host TBP, Tat may also modulate transcription initiation. Tat can reactivate a latently infected cell by penetrating in it and transactivating its LTR promoter. In the cytoplasm, Tat is thought to act as a translational activator of HIV-1 mRNAs. In terms of biological role, extracellular circulating Tat can be endocytosed by surrounding uninfected cells via the binding to several surface receptors such as CD26, CXCR4, heparan sulfate proteoglycans (HSPG) or LDLR. Neurons are rarely infected, but they internalize Tat via their LDLR. Through its interaction with nuclear HATs, Tat is potentially able to control the acetylation-dependent cellular gene expression. Modulates the expression of many cellular genes involved in cell survival, proliferation or in coding for cytokines or cytokine receptors. Tat plays a role in T-cell and neurons apoptosis. Tat induced neurotoxicity and apoptosis probably contribute to neuroAIDS. Circulating Tat also acts as a chemokine-like and/or growth factor-like molecule that binds to specific receptors on the surface of the cells, affecting many cellular pathways. In the vascular system, Tat binds to ITGAV/ITGB3 and ITGA5/ITGB1 integrins dimers at the surface of endothelial cells and competes with bFGF for heparin-binding sites, leading to an excess of soluble bFGF. The polypeptide is Protein Tat (Human immunodeficiency virus type 1 group M subtype C (isolate ETH2220) (HIV-1)).